Here is a 141-residue protein sequence, read N- to C-terminus: Phosphoribosyl-AMP cyclohydrolase (141 aa).

Asp-88 is a binding site for Mg(2+). Cys-89 serves as a coordination point for Zn(2+). Mg(2+) contacts are provided by Asp-90 and Asp-92. Residues Cys-109 and Cys-116 each contribute to the Zn(2+) site.

The protein belongs to the PRA-CH family. Homodimer. It depends on Mg(2+) as a cofactor. Zn(2+) serves as cofactor.

It is found in the cytoplasm. The enzyme catalyses 1-(5-phospho-beta-D-ribosyl)-5'-AMP + H2O = 1-(5-phospho-beta-D-ribosyl)-5-[(5-phospho-beta-D-ribosylamino)methylideneamino]imidazole-4-carboxamide. Its pathway is amino-acid biosynthesis; L-histidine biosynthesis; L-histidine from 5-phospho-alpha-D-ribose 1-diphosphate: step 3/9. In terms of biological role, catalyzes the hydrolysis of the adenine ring of phosphoribosyl-AMP. This chain is Phosphoribosyl-AMP cyclohydrolase, found in Paracidovorax citrulli (strain AAC00-1) (Acidovorax citrulli).